The primary structure comprises 148 residues: Aspartate 1-decarboxylase (148 aa).

The active-site Schiff-base intermediate with substrate; via pyruvic acid is the S25. Position 25 is a pyruvic acid (Ser) (S25). Residue T57 participates in substrate binding. The active-site Proton donor is Y58. 73–75 (GAA) contacts substrate.

It belongs to the PanD family. Heterooctamer of four alpha and four beta subunits. Pyruvate is required as a cofactor. Is synthesized initially as an inactive proenzyme, which is activated by self-cleavage at a specific serine bond to produce a beta-subunit with a hydroxyl group at its C-terminus and an alpha-subunit with a pyruvoyl group at its N-terminus.

The protein localises to the cytoplasm. It catalyses the reaction L-aspartate + H(+) = beta-alanine + CO2. Its pathway is cofactor biosynthesis; (R)-pantothenate biosynthesis; beta-alanine from L-aspartate: step 1/1. Its function is as follows. Catalyzes the pyruvoyl-dependent decarboxylation of aspartate to produce beta-alanine. The sequence is that of Aspartate 1-decarboxylase from Rhodococcus erythropolis (strain PR4 / NBRC 100887).